Here is a 902-residue protein sequence, read N- to C-terminus: MKNSFQTLKTLTTKSGTYGYYDLQELERKGVAEVSRLPFSIRVMLESLLRNEDGYQVTREDIEALARWRPDPGEINVPLKLARVILQDFTGVPAVVDLAAMRDAIKAKGGDPKRINPVVPADLVIDHSVQVDAFGTAYAFFYNVEKEYERNRERYLLLKWAQNALENFRVVPPGTGIVHQVNIEYLTKVVMTGKRDGLTLAFPDSLVGTDSHTTMVNGLGVLGWGVGGIEAEAVMLGQPYYMLAPRVVGFKLYGELPEGATATDLVLTVTEMLRKHGVVGKFVEFYGPGVAKLSTPDRATIANMAPEYGATMGFFPVDEETLNYLRQTGRPEELVELVEAYTKAVGLFRTPEAEEKVQYSEYLELDLSAVEPSLAGPKRPQDRVPLKEVKKSFLAHLTKPVKERGFGLSEDQLQRKVLVKRRDEEFELTHGSVVIAAITSCTNTSNPSVMLGAGLLAKKAVEAGLDRKPWVKTSLAPGSKVVTDYLEMSGLMPFLEALGFHLVGYGCTTCIGNSGPLPEDIAKAVEEGNLVVAAVLSGNRNFEGRINPHVKANYLASPMLVVAYALAGRMDIDFTTEPLGFDPNGKPIYLKDIWPSMEEIREAIRKTLDPELFKKEYSKVFEGDERWQALPAPTGELYQWDPESTYIQNPPFFEDLGERKVEDIRGARVLLVLGDSVTTDHISPAGAIPVKSPAGQYLISKGVKPEDFNSYGSRRGNHEVMMRGTFANIRIKNLMLDGIEGGYAKKLPEGDVDFVYNVAMRYKAEGTPLLVIAGKEYGTGSSRDWAAKGTYLLGIRAVLAESFERIHRSNLVGMGVLPLEFLPGENRETLGLTGYEVYDILGLEDLKPRKLVDIVARREDGSEVRFQAIARLDTPVEVDYYKNGGILQTVLLNMLKEAKATE.

[4Fe-4S] cluster-binding residues include cysteine 441, cysteine 507, and cysteine 510.

It belongs to the aconitase/IPM isomerase family. Monomer. [4Fe-4S] cluster serves as cofactor.

It carries out the reaction citrate = D-threo-isocitrate. The enzyme catalyses (2S,3R)-3-hydroxybutane-1,2,3-tricarboxylate = 2-methyl-cis-aconitate + H2O. Its pathway is carbohydrate metabolism; tricarboxylic acid cycle; isocitrate from oxaloacetate: step 2/2. It participates in organic acid metabolism; propanoate degradation. Involved in the catabolism of short chain fatty acids (SCFA) via the tricarboxylic acid (TCA)(acetyl degradation route) and probably the 2-methylcitrate cycle I (propionate degradation route). Catalyzes the reversible isomerization of citrate to isocitrate via cis-aconitate. Also able to catalyze the hydration of cis-homoaconitate to yield (R)-homocitrate, but with a lower efficiency. Could catalyze the hydration of 2-methyl-cis-aconitate to yield (2R,3S)-2-methylisocitrate. The apo form of AcnA functions as a RNA-binding regulatory protein. In Thermus thermophilus (strain ATCC 27634 / DSM 579 / HB8), this protein is Aconitate hydratase A (acoA).